The chain runs to 569 residues: Peroxynitrite isomerase THAP4 (569 aa).

Residues 1 to 85 (MVICCAAVNC…LKPTAVPSIF (85 aa)) form a THAP-type zinc finger. Residues 83 to 219 (SIFHLSEKKR…GISMDDFTPP (137 aa)) form a disordered region. Positions 121–130 (IGSSLSSSDN) are enriched in polar residues. Residue serine 159 is modified to Phosphoserine. The segment covering 196 to 210 (ASSSAADAGGADKSG) has biased composition (low complexity). The HCFC1-binding motif (HBM) signature appears at 230–233 (LHSY). Serine 234 carries the phosphoserine modification. The segment at 235 to 312 (FSSKHTRERP…EAVQSEHSDA (78 aa)) is disordered. A compositionally biased stretch (basic and acidic residues) spans 242-262 (ERPSVPREPMDRKRLKRDIEP). Polar residues predominate over residues 265-279 (SGNSVAQSPPSSSLT). Residues 280 to 289 (ATPQKASQSP) are compositionally biased toward low complexity. The nitrobindin stretch occupies residues 407-569 (PPKLNPVVEP…LHITYKKVTP (163 aa)). Heme b-binding residues include threonine 436 and histidine 559.

This sequence in the C-terminal section; belongs to the nitrobindin family. As to quaternary structure, homodimer. Requires heme b as cofactor.

The protein resides in the cytoplasm. The protein localises to the nucleus. The enzyme catalyses peroxynitrite = nitrate. It functions in the pathway nitrogen metabolism. Heme-binding protein able to scavenge peroxynitrite and to protect free L-tyrosine against peroxynitrite-mediated nitration, by acting as a peroxynitrite isomerase that converts peroxynitrite to nitrate. Therefore, this protein likely plays a role in peroxynitrite sensing and in the detoxification of reactive nitrogen and oxygen species (RNS and ROS, respectively). Is able to bind nitric oxide (NO) in vitro, but may act as a sensor of peroxynitrite levels in vivo, possibly modulating the transcriptional activity residing in the N-terminal region. The polypeptide is Peroxynitrite isomerase THAP4 (Rattus norvegicus (Rat)).